Here is a 258-residue protein sequence, read N- to C-terminus: Regulatory protein RecX (258 aa).

It belongs to the RecX family.

The protein localises to the cytoplasm. In terms of biological role, modulates RecA activity. This chain is Regulatory protein RecX, found in Streptococcus pneumoniae (strain P1031).